Here is a 351-residue protein sequence, read N- to C-terminus: MKKKKLLVMAGGTGGHVFPAIAVAQTLQKQEWDICWLGTKDRMEAQLVPKYDIPIRFIQISGLRGKGIKALFNAPFAIFRAVLQAKKIIQEEKPDAVLGMGGYVSGPAGVAAKLCGVPIILHEQNAIAGLTNKLLGKIASCVLQAFPTAFSNAEVVGNPVREDLFEMPNPDIRFSDREEKLRVLVVGGSQGARVLNHTLPKVVAQIADKLEVRHQVGKGAVEEVRQLYGENLEQVKITEFIDNMAEAYAWADVVICRSGALTVCEIAAVGAAAIFVPFQHKDRQQYLNAKYLSDVGAAKIIEQADLTPEILVNSLKNFTRENLLQMALKAKTMSMPNAAQRVAEVIKQYSN.

UDP-N-acetyl-alpha-D-glucosamine is bound by residues 13–15 (TGG), Asn125, Arg161, Ser189, Ile241, 260–265 (ALTVCE), and Gln285.

Belongs to the glycosyltransferase 28 family. MurG subfamily.

It is found in the cell inner membrane. It carries out the reaction di-trans,octa-cis-undecaprenyl diphospho-N-acetyl-alpha-D-muramoyl-L-alanyl-D-glutamyl-meso-2,6-diaminopimeloyl-D-alanyl-D-alanine + UDP-N-acetyl-alpha-D-glucosamine = di-trans,octa-cis-undecaprenyl diphospho-[N-acetyl-alpha-D-glucosaminyl-(1-&gt;4)]-N-acetyl-alpha-D-muramoyl-L-alanyl-D-glutamyl-meso-2,6-diaminopimeloyl-D-alanyl-D-alanine + UDP + H(+). Its pathway is cell wall biogenesis; peptidoglycan biosynthesis. Functionally, cell wall formation. Catalyzes the transfer of a GlcNAc subunit on undecaprenyl-pyrophosphoryl-MurNAc-pentapeptide (lipid intermediate I) to form undecaprenyl-pyrophosphoryl-MurNAc-(pentapeptide)GlcNAc (lipid intermediate II). This chain is UDP-N-acetylglucosamine--N-acetylmuramyl-(pentapeptide) pyrophosphoryl-undecaprenol N-acetylglucosamine transferase, found in Haemophilus influenzae (strain PittEE).